The primary structure comprises 450 residues: ATP-dependent protease ATPase subunit HslU (450 aa).

ATP contacts are provided by residues V29, 71 to 76, D261, E328, and R400; that span reads GVGKTE.

This sequence belongs to the ClpX chaperone family. HslU subfamily. A double ring-shaped homohexamer of HslV is capped on each side by a ring-shaped HslU homohexamer. The assembly of the HslU/HslV complex is dependent on binding of ATP.

Its subcellular location is the cytoplasm. ATPase subunit of a proteasome-like degradation complex; this subunit has chaperone activity. The binding of ATP and its subsequent hydrolysis by HslU are essential for unfolding of protein substrates subsequently hydrolyzed by HslV. HslU recognizes the N-terminal part of its protein substrates and unfolds these before they are guided to HslV for hydrolysis. The chain is ATP-dependent protease ATPase subunit HslU from Rickettsia canadensis (strain McKiel).